Consider the following 470-residue polypeptide: Cysteine--tRNA ligase (470 aa).

Cys-28 provides a ligand contact to Zn(2+). Positions Pro-30–Asn-40 match the 'HIGH' region motif. Zn(2+)-binding residues include Cys-212, His-237, and Glu-241. The 'KMSKS' region motif lies at Lys-271–Ser-275. ATP is bound at residue Lys-274.

Belongs to the class-I aminoacyl-tRNA synthetase family. Monomer. The cofactor is Zn(2+).

The protein resides in the cytoplasm. The enzyme catalyses tRNA(Cys) + L-cysteine + ATP = L-cysteinyl-tRNA(Cys) + AMP + diphosphate. The protein is Cysteine--tRNA ligase of Ligilactobacillus salivarius (strain UCC118) (Lactobacillus salivarius).